The primary structure comprises 346 residues: Flap endonuclease 1 (346 aa).

The interval 1 to 102 (MGVTELGKLI…AEIEERRKAK (102 aa)) is N-domain. The Mg(2+) site is built by D31, D84, E156, E158, D177, D179, and D239. Residues 120 to 261 (EVAKYAKRAI…RALKLIWEFG (142 aa)) are I-domain.

This sequence belongs to the XPG/RAD2 endonuclease family. FEN1 subfamily. As to quaternary structure, interacts with PCNA. PCNA stimulates the nuclease activity without altering cleavage specificity. Mg(2+) serves as cofactor.

Its function is as follows. Structure-specific nuclease with 5'-flap endonuclease and 5'-3' exonuclease activities involved in DNA replication and repair. During DNA replication, cleaves the 5'-overhanging flap structure that is generated by displacement synthesis when DNA polymerase encounters the 5'-end of a downstream Okazaki fragment. Binds the unpaired 3'-DNA end and kinks the DNA to facilitate 5' cleavage specificity. Cleaves one nucleotide into the double-stranded DNA from the junction in flap DNA, leaving a nick for ligation. Also involved in the base excision repair (BER) pathway. Acts as a genome stabilization factor that prevents flaps from equilibrating into structures that lead to duplications and deletions. Also possesses 5'-3' exonuclease activity on nicked or gapped double-stranded DNA. This Pyrobaculum arsenaticum (strain DSM 13514 / JCM 11321 / PZ6) protein is Flap endonuclease 1.